A 171-amino-acid polypeptide reads, in one-letter code: Peptide deformylase (171 aa).

2 residues coordinate Fe cation: C92 and H134. Residue E135 is part of the active site. A Fe cation-binding site is contributed by H138.

The protein belongs to the polypeptide deformylase family. It depends on Fe(2+) as a cofactor.

The enzyme catalyses N-terminal N-formyl-L-methionyl-[peptide] + H2O = N-terminal L-methionyl-[peptide] + formate. Functionally, removes the formyl group from the N-terminal Met of newly synthesized proteins. Requires at least a dipeptide for an efficient rate of reaction. N-terminal L-methionine is a prerequisite for activity but the enzyme has broad specificity at other positions. This Polynucleobacter necessarius subsp. necessarius (strain STIR1) protein is Peptide deformylase.